The primary structure comprises 82 residues: Small ribosomal subunit protein bS16 (82 aa).

It belongs to the bacterial ribosomal protein bS16 family.

The polypeptide is Small ribosomal subunit protein bS16 (Vibrio parahaemolyticus serotype O3:K6 (strain RIMD 2210633)).